We begin with the raw amino-acid sequence, 788 residues long: Glucan 1,3-beta-glucosidase (788 aa).

The N-terminal stretch at 1-42 is a signal peptide; the sequence is MRFSSLLACLGAVGIQAAAIPFQRRVDNTTDSGSLDAAQAAA. N-linked (GlcNAc...) asparagine glycans are attached at residues Asn28, Asn233, Asn381, and Asn773.

Belongs to the glycosyl hydrolase 55 family.

The enzyme catalyses Successive hydrolysis of beta-D-glucose units from the non-reducing ends of (1-&gt;3)-beta-D-glucans, releasing alpha-glucose.. The sequence is that of Glucan 1,3-beta-glucosidase (EXG1) from Cochliobolus carbonum (Maize leaf spot fungus).